A 336-amino-acid polypeptide reads, in one-letter code: MIEADRLVAPGSIVAEEVADRAIRPKLLEEYIGQPQVRSQMEIFIQAAKLRGDALDHLLIFGPPGLGKTTLANIVANEMGVNLRTTSGPVLEKAGDLAAMLTNLEPHDVLFIDEIHRLSPVVEEVLYPAMEDYQLDIMIGEGPAARSIKIDLPPFTLIGATTRAGSLTSPLRDRFGIVQRLEFYQVADLQHIVSRSARHMGLEMNDEASLEVAKRSRGTPRIANRLLRRVRDFAEVRHDGVINQHVASQALDMLNVDAEGFDYMDRKLLLAVIDKFFGGPVGLDNLAAAIGEERETIEDVLEPFLIQQGFLQRTPRGRMATTRAWNHFGITPPQMP.

Positions 4–184 (ADRLVAPGSI…FGIVQRLEFY (181 aa)) are large ATPase domain (RuvB-L). ATP is bound by residues isoleucine 23, arginine 24, glycine 65, lysine 68, threonine 69, threonine 70, 131–133 (EDY), arginine 174, tyrosine 184, and arginine 221. Position 69 (threonine 69) interacts with Mg(2+). The interval 185–255 (QVADLQHIVS…VASQALDMLN (71 aa)) is small ATPAse domain (RuvB-S). The head domain (RuvB-H) stretch occupies residues 258 to 336 (AEGFDYMDRK…HFGITPPQMP (79 aa)). Residues arginine 294, arginine 313, and arginine 318 each coordinate DNA.

This sequence belongs to the RuvB family. Homohexamer. Forms an RuvA(8)-RuvB(12)-Holliday junction (HJ) complex. HJ DNA is sandwiched between 2 RuvA tetramers; dsDNA enters through RuvA and exits via RuvB. An RuvB hexamer assembles on each DNA strand where it exits the tetramer. Each RuvB hexamer is contacted by two RuvA subunits (via domain III) on 2 adjacent RuvB subunits; this complex drives branch migration. In the full resolvosome a probable DNA-RuvA(4)-RuvB(12)-RuvC(2) complex forms which resolves the HJ.

The protein localises to the cytoplasm. The catalysed reaction is ATP + H2O = ADP + phosphate + H(+). In terms of biological role, the RuvA-RuvB-RuvC complex processes Holliday junction (HJ) DNA during genetic recombination and DNA repair, while the RuvA-RuvB complex plays an important role in the rescue of blocked DNA replication forks via replication fork reversal (RFR). RuvA specifically binds to HJ cruciform DNA, conferring on it an open structure. The RuvB hexamer acts as an ATP-dependent pump, pulling dsDNA into and through the RuvAB complex. RuvB forms 2 homohexamers on either side of HJ DNA bound by 1 or 2 RuvA tetramers; 4 subunits per hexamer contact DNA at a time. Coordinated motions by a converter formed by DNA-disengaged RuvB subunits stimulates ATP hydrolysis and nucleotide exchange. Immobilization of the converter enables RuvB to convert the ATP-contained energy into a lever motion, pulling 2 nucleotides of DNA out of the RuvA tetramer per ATP hydrolyzed, thus driving DNA branch migration. The RuvB motors rotate together with the DNA substrate, which together with the progressing nucleotide cycle form the mechanistic basis for DNA recombination by continuous HJ branch migration. Branch migration allows RuvC to scan DNA until it finds its consensus sequence, where it cleaves and resolves cruciform DNA. This chain is Holliday junction branch migration complex subunit RuvB, found in Cronobacter sakazakii (strain ATCC BAA-894) (Enterobacter sakazakii).